The sequence spans 384 residues: Gastrin-releasing peptide receptor (384 aa).

Topologically, residues 1 to 39 (MDPNNCSHLNLEVDPFLSCNNTFNQTLNPPKMDNWFHPG) are extracellular. N5, N20, and N24 each carry an N-linked (GlcNAc...) asparagine glycan. A helical membrane pass occupies residues 40–63 (IIYVIPAVYGLIIVIGLIGNITLI). The Cytoplasmic segment spans residues 64–77 (KIFCTVKSMRNVPN). The chain crosses the membrane as a helical span at residues 78 to 97 (LFISSLALGDLLLLVTCAPV). At 98–115 (DASKYLADRWLFGRIGCK) the chain is on the extracellular side. Residues C114 and C197 are joined by a disulfide bond. A helical membrane pass occupies residues 116-137 (LIPFIQLTSVGVSVFTLTALSA). Over 138-153 (DRYKAIVRPMDIQASH) the chain is Cytoplasmic. The helical transmembrane segment at 154 to 175 (ALMKICLKAALIWIVSMLLAIP) threads the bilayer. Residues 176 to 209 (EAVFSDLHPFHVKDTNQTFISCAPYPHSNELHPK) are Extracellular-facing. The helical transmembrane segment at 210-235 (IHSMASFLVFYIIPLSIISVYYYFIA) threads the bilayer. The Cytoplasmic portion of the chain corresponds to 236–265 (RNLIQSAYNLPVEGNIHVKKQIESRKRLAK). Residues 266 to 286 (TVLVFVGLFAFCWLPNHVIYL) form a helical membrane-spanning segment. The Extracellular portion of the chain corresponds to 287 to 299 (YRSYHYSEVDTSM). A helical transmembrane segment spans residues 300–326 (LHFITSICARLLAFTNSCVNPFALYLL). Residues 327–384 (SKSFRKQFNTQLLCCQPSLLNRSHSTGRSTTCMTSFKSTNPSATFSLINGNICHEGYV) are Cytoplasmic-facing. C340 is lipidated: S-palmitoyl cysteine. Residue S351 is modified to Phosphoserine.

This sequence belongs to the G-protein coupled receptor 1 family. As to expression, expressed in the hippocampal CA1 region (at protein level).

It localises to the cell membrane. Receptor for gastrin-releasing peptide (GRP). Signals via association with G proteins that activate a phosphatidylinositol-calcium second messenger system, resulting in Akt phosphorylation. Contributes to the regulation of food intake. Contributes to the perception of prurient stimuli and transmission of itch signals in the spinal cord that promote scratching behavior, but does not play a role in the perception of pain. Contributes primarily to nonhistaminergic itch sensation. In one study, shown to act in the amygdala as part of an inhibitory network which inhibits memory specifically related to learned fear. In another study, shown to contribute to disinhibition of glutamatergic cells in the auditory cortex via signaling on vasoactive intestinal peptide-expressing cells which leads to enhanced auditory fear memories. Contributes to the induction of sighing through signaling in the pre-Botzinger complex, a cluster of several thousand neurons in the ventrolateral medulla responsible for inspiration during respiratory activity. This is Gastrin-releasing peptide receptor (Grpr) from Rattus norvegicus (Rat).